The chain runs to 260 residues: O-antigen export system permease protein RfbA (260 aa).

7 helical membrane passes run 31 to 51, 63 to 83, 109 to 129, 139 to 159, 173 to 193, 201 to 221, and 229 to 249; these read FLGFLWTFLNPTLHMLVYVLL, FPFFMFVGLLPWIWFSTSVGG, VVVTNLCNFVLSLPLMLVLGM, VVLFPVVVLIQLTFTLALTYI, IVSNLLTLWFFATPVLYPLST, SLMLALNPMVSLMTSYQAIFY, and EPLMALAAVSVVLLWAASSIF. The 221-residue stretch at 32–252 folds into the ABC transmembrane type-2 domain; it reads LGFLWTFLNP…WAASSIFESR (221 aa).

It belongs to the ABC-2 integral membrane protein family.

Its subcellular location is the cell inner membrane. Functionally, may form an ATP-driven O-antigen export apparatus, in association with RfbB. The sequence is that of O-antigen export system permease protein RfbA (rfbA) from Myxococcus xanthus.